A 355-amino-acid chain; its full sequence is Nicotinate-nucleotide--dimethylbenzimidazole phosphoribosyltransferase (355 aa).

Residue glutamate 321 is the Proton acceptor of the active site.

It belongs to the CobT family.

It catalyses the reaction 5,6-dimethylbenzimidazole + nicotinate beta-D-ribonucleotide = alpha-ribazole 5'-phosphate + nicotinate + H(+). Its pathway is nucleoside biosynthesis; alpha-ribazole biosynthesis; alpha-ribazole from 5,6-dimethylbenzimidazole: step 1/2. Catalyzes the synthesis of alpha-ribazole-5'-phosphate from nicotinate mononucleotide (NAMN) and 5,6-dimethylbenzimidazole (DMB). The polypeptide is Nicotinate-nucleotide--dimethylbenzimidazole phosphoribosyltransferase (Desulfotalea psychrophila (strain LSv54 / DSM 12343)).